The sequence spans 339 residues: MTDIERFIEKLPKAELHLHLEGTLEAELKLKLSHRNKIPLKQSSIEEIKESYNFHDLASFLEVYYEGVELLLHEQDFYDLCYQYLRKAASQNVVYAEMFFDPQLHTRRGISFETVIKGLIRARDDAMRDFHIYSQLIMCFIREMSFENAEETLNASLPYKSEIIGIGLDSNEENNPPIKFLKVFQRARQLGYRLTCHCDLHQKNTTTHIRQALEDIGVERIDHGINILDDPELIKLALERNIPFTVCPFSNEIVYPGKAQPEIRIMLDTGLKVTINSDDPAYMHCFYITENFNLAQKGASLTKKELVQICRNSFEAAWISEEKRNHYLEALNSFASAYD.

Zn(2+)-binding residues include histidine 17, histidine 19, histidine 197, and aspartate 278. Aspartate 279 is a binding site for substrate.

The protein belongs to the metallo-dependent hydrolases superfamily. Adenosine and AMP deaminases family. Adenine deaminase type 2 subfamily. Requires Zn(2+) as cofactor.

It localises to the cytoplasm. The protein resides in the nucleus. This is an uncharacterized protein from Schizosaccharomyces pombe (strain 972 / ATCC 24843) (Fission yeast).